The sequence spans 273 residues: Formamidopyrimidine-DNA glycosylase (273 aa).

Pro2 (schiff-base intermediate with DNA) is an active-site residue. The Proton donor role is filled by Glu3. Residue Lys58 is the Proton donor; for beta-elimination activity of the active site. DNA is bound by residues His92, Arg111, and Arg153. The FPG-type zinc finger occupies 238–272 (RVYGREGQKCFNCSSTILKTKNSGRSTFYCKTCQY). Arg262 acts as the Proton donor; for delta-elimination activity in catalysis.

Belongs to the FPG family. Monomer. Zn(2+) serves as cofactor.

The enzyme catalyses Hydrolysis of DNA containing ring-opened 7-methylguanine residues, releasing 2,6-diamino-4-hydroxy-5-(N-methyl)formamidopyrimidine.. The catalysed reaction is 2'-deoxyribonucleotide-(2'-deoxyribose 5'-phosphate)-2'-deoxyribonucleotide-DNA = a 3'-end 2'-deoxyribonucleotide-(2,3-dehydro-2,3-deoxyribose 5'-phosphate)-DNA + a 5'-end 5'-phospho-2'-deoxyribonucleoside-DNA + H(+). Functionally, involved in base excision repair of DNA damaged by oxidation or by mutagenic agents. Acts as a DNA glycosylase that recognizes and removes damaged bases. Has a preference for oxidized purines, such as 7,8-dihydro-8-oxoguanine (8-oxoG). Has AP (apurinic/apyrimidinic) lyase activity and introduces nicks in the DNA strand. Cleaves the DNA backbone by beta-delta elimination to generate a single-strand break at the site of the removed base with both 3'- and 5'-phosphates. In Rickettsia canadensis (strain McKiel), this protein is Formamidopyrimidine-DNA glycosylase.